Reading from the N-terminus, the 261-residue chain is Ribosomal RNA small subunit methyltransferase A (261 aa).

The S-adenosyl-L-methionine site is built by His-13, Leu-15, Gly-40, Glu-61, Asp-85, and Asn-105.

It belongs to the class I-like SAM-binding methyltransferase superfamily. rRNA adenine N(6)-methyltransferase family. RsmA subfamily.

The protein localises to the cytoplasm. The enzyme catalyses adenosine(1518)/adenosine(1519) in 16S rRNA + 4 S-adenosyl-L-methionine = N(6)-dimethyladenosine(1518)/N(6)-dimethyladenosine(1519) in 16S rRNA + 4 S-adenosyl-L-homocysteine + 4 H(+). Specifically dimethylates two adjacent adenosines (A1518 and A1519) in the loop of a conserved hairpin near the 3'-end of 16S rRNA in the 30S particle. May play a critical role in biogenesis of 30S subunits. This chain is Ribosomal RNA small subunit methyltransferase A, found in Flavobacterium johnsoniae (strain ATCC 17061 / DSM 2064 / JCM 8514 / BCRC 14874 / CCUG 350202 / NBRC 14942 / NCIMB 11054 / UW101) (Cytophaga johnsonae).